Here is a 242-residue protein sequence, read N- to C-terminus: MMNFADTLVILNDDAPCELLRKKYAEMLVPTVSVSSFKRNKIYKTYNNVFLYTYREFDFLWDLDDNILHKVQRCLNKSGVLKLVLYISNTAGGDSQRHDEIAKRLKKECLYSGFINISNETNMAENGIIINVTAENPDFLSNEDDNDEHSSDGEAHENAEDNKKVVNRVCANCTCGKKANGVKLDTVAINEKEVQYLTENAVSSCGNCYLGDAFRCASCPYKGLPAFQPGENVKLNLDNEPN.

Residues 1–140 form an N-terminal SAM-like domain region; it reads MMNFADTLVI…NVTAENPDFL (140 aa). The segment at 140–159 is disordered; it reads LSNEDDNDEHSSDGEAHENA. Residues 141–162 form a linker region; it reads SNEDDNDEHSSDGEAHENAEDN. A compositionally biased stretch (basic and acidic residues) spans 148–159; the sequence is EHSSDGEAHENA. Residues cysteine 205, cysteine 208, cysteine 216, and cysteine 219 each contribute to the [4Fe-4S] cluster site. 2 short sequence motifs (cx2C motif) span residues 205–208 and 216–219; these read CGNC and CASC. The tract at residues 205–219 is fe-S binding site B; sequence CGNCYLGDAFRCASC.

The protein belongs to the anamorsin family. As to quaternary structure, monomer. [4Fe-4S] cluster serves as cofactor.

It is found in the cytoplasm. The protein resides in the mitochondrion intermembrane space. Functionally, component of the cytosolic iron-sulfur (Fe-S) protein assembly (CIA) machinery. Required for the maturation of extramitochondrial Fe-S proteins. Part of an electron transfer chain functioning in an early step of cytosolic Fe-S biogenesis, facilitating the de novo assembly of a [4Fe-4S] cluster on the cytosolic Fe-S scaffold complex. Electrons are transferred from NADPH via a FAD- and FMN-containing diflavin oxidoreductase. Together with the diflavin oxidoreductase, also required for the assembly of the diferric tyrosyl radical cofactor of ribonucleotide reductase (RNR), probably by providing electrons for reduction during radical cofactor maturation in the catalytic small subunit. This is Anamorsin homolog from Plasmodium vivax (strain Salvador I).